The chain runs to 243 residues: Sugar fermentation stimulation protein homolog (243 aa).

The protein belongs to the SfsA family.

This chain is Sugar fermentation stimulation protein homolog, found in Bdellovibrio bacteriovorus (strain ATCC 15356 / DSM 50701 / NCIMB 9529 / HD100).